Reading from the N-terminus, the 78-residue chain is Large ribosomal subunit protein bL28 (78 aa).

Belongs to the bacterial ribosomal protein bL28 family.

This is Large ribosomal subunit protein bL28 from Synechococcus sp. (strain ATCC 27144 / PCC 6301 / SAUG 1402/1) (Anacystis nidulans).